The sequence spans 257 residues: Type I iodothyronine deiodinase (257 aa).

Residues 1–12 (MGLPGLGLLLKR) lie on the Extracellular side of the membrane. Residues 13 to 33 (FGVLVRVALKVAVGKVLLTLW) traverse the membrane as a helical; Signal-anchor for type III membrane protein segment. Residues 34–257 (PSAIRPHLLA…CRSSAQSPRL (224 aa)) lie on the Cytoplasmic side of the membrane. Sec-126 is a catalytic residue. A non-standard amino acid (selenocysteine) is located at residue Sec-126.

This sequence belongs to the iodothyronine deiodinase family. Predominantly monomer. Can form homodimers but homodimerization is not essential for enzyme activity. As to expression, liver specific.

It localises to the cell membrane. Its subcellular location is the endoplasmic reticulum membrane. It is found in the basolateral cell membrane. It catalyses the reaction 3,3',5-triiodo-L-thyronine + iodide + A + H(+) = L-thyroxine + AH2. It carries out the reaction 3,3',5'-triiodo-L-thyronine + iodide + A + H(+) = L-thyroxine + AH2. The catalysed reaction is 3,3'-diiodo-L-thyronine + iodide + A + H(+) = 3,3',5'-triiodo-L-thyronine + AH2. The enzyme catalyses 3,3'-diiodo-L-thyronine + iodide + A + H(+) = 3,3',5-triiodo-L-thyronine + AH2. It catalyses the reaction 3'-iodo-L-thyronine + iodide + A + H(+) = 3',5'-diiodo-L-thyronine + AH2. It carries out the reaction 3-iodo-L-thyronine + iodide + A + H(+) = 3,5-diiodo-L-thyronine + AH2. The catalysed reaction is 3-iodo-L-thyronine + iodide + A + H(+) = 3,3'-diiodo-L-thyronine + AH2. The enzyme catalyses 3,3'-diiodothyronamine + iodide + A + H(+) = 3,3',5'-triiodothyronamine + AH2. It catalyses the reaction 3'-iodothyronamine + iodide + A + H(+) = 3',5'-diiodothyronamine + AH2. It carries out the reaction 3-iodothyronamine + iodide + A + H(+) = 3,3'-diiodothyronamine + AH2. The catalysed reaction is 3,3'-diiodothyronamine + iodide + A + H(+) = 3,3',5-triiodothyronamine + AH2. The enzyme catalyses 3-iodothyronamine + iodide + A + H(+) = 3,5-diiodothyronamine + AH2. It catalyses the reaction 3,3'-diiodo-L-thyronine sulfate + iodide + A + H(+) = 3,3',5'-triiodo-L-thyronine sulfate + AH2. It carries out the reaction 3,3',5'-triiodo-L-thyronine sulfate + iodide + A + H(+) = L-thyroxine sulfate + AH2. The catalysed reaction is 3,3'-diiodo-L-thyronine sulfate + iodide + A + H(+) = 3,3',5-triiodo-L-thyronine sulfate + AH2. Functionally, plays a crucial role in the metabolism of thyroid hormones (TH) and has specific roles in TH activation and inactivation by deiodination. Catalyzes the deiodination of L-thyroxine (T4) to 3,5,3'-triiodothyronine (T3) and 3',5'-diiodothyronine (3',5'-T2) to 3'-monoiodothyronine (3'-T1) via outer-ring deiodination (ORD). Catalyzes the deiodination of T4 to 3,3',5'-triiodothyronine (rT3), T3 to 3,3'-diiodothyronine (3,3'-T2), 3,5-diiodothyronine (3,5-T2) to 3-monoiodothyronine (3-T1) and 3,3'-T2 to 3-T1 via inner-ring deiodination (IRD). Catalyzes the deiodination of rT3 to 3,3'-T2 via ORD. Catalyzes the phenolic ring deiodinations of 3,3',5'-triiodothyronamine, 3',5'-diiodothyronamine and 3,3'-diiodothyronamine as well as tyrosyl ring deiodinations of 3,5,3'-triiodothyronamine and 3,5-diiodothyronamine. Catalyzes the deiodination of L-thyroxine sulfate and 3,3',5-triiodo-L-thyronine sulfate via IRD and of 3,3',5'-triiodo-L-thyronine sulfate via ORD. The sequence is that of Type I iodothyronine deiodinase (DIO1) from Suncus murinus (Asian house shrew).